A 228-amino-acid chain; its full sequence is UPF0173 metal-dependent hydrolase lmo1577 (228 aa).

The protein belongs to the UPF0173 family.

In Listeria monocytogenes serovar 1/2a (strain ATCC BAA-679 / EGD-e), this protein is UPF0173 metal-dependent hydrolase lmo1577.